The primary structure comprises 685 residues: Allergen Cr-PI (685 aa).

The N-terminal stretch at 1 to 16 (MKTALVFAAVVAFVAA) is a signal peptide. Asn-233 carries N-linked (GlcNAc...) asparagine glycosylation.

Belongs to the hemocyanin family.

It localises to the secreted. Its subcellular location is the extracellular space. Larval storage protein (LSP) which may serve as a store of amino acids for synthesis of adult proteins. The chain is Allergen Cr-PI from Periplaneta americana (American cockroach).